The primary structure comprises 492 residues: Probable cobyric acid synthase (492 aa).

One can recognise a GATase cobBQ-type domain in the interval 248-434; it reads PVRIAVVRLP…MHGLFQNPGA (187 aa). C327 acts as the Nucleophile in catalysis. Residue H426 is part of the active site.

This sequence belongs to the CobB/CobQ family. CobQ subfamily.

It participates in cofactor biosynthesis; adenosylcobalamin biosynthesis. In terms of biological role, catalyzes amidations at positions B, D, E, and G on adenosylcobyrinic A,C-diamide. NH(2) groups are provided by glutamine, and one molecule of ATP is hydrogenolyzed for each amidation. This chain is Probable cobyric acid synthase, found in Methanoculleus marisnigri (strain ATCC 35101 / DSM 1498 / JR1).